The chain runs to 85 residues: Large ribosomal subunit protein uL23 (85 aa).

This sequence belongs to the universal ribosomal protein uL23 family. In terms of assembly, part of the 50S ribosomal subunit. Interacts with protein L29 and weakly with protein L39e.

Its function is as follows. Binds to a specific region on the 23S rRNA. Located at the polypeptide exit tunnel on the outside of the subunit. The chain is Large ribosomal subunit protein uL23 from Haloarcula marismortui (strain ATCC 43049 / DSM 3752 / JCM 8966 / VKM B-1809) (Halobacterium marismortui).